Here is a 296-residue protein sequence, read N- to C-terminus: MEYIKPHKGFSTLIILGITLGIDLIFSLLSTFINTYIVLRILEIFIVFFNIYQLYYILKSLTLKYCYDNENFYVLWCFGIRRVTIPFKEIEAYNVSHGEIKGVKLWGYGRNFFALGTFSVNDIGIVNMFVTATKNVIYIKCNSSIYGISPEKCDEVKNFLEKRKLVLKNWTYEKRNKVSLSKDRHFDILIFLISIVILMVTIIPFILYLRGVMPHKMPLSFDSNFKPMIYGTSREFAFKHMMYGAYNMIIFFCIYYSAYFYARYSKKLAYRLMYISFLVAFIFLIFQFKIYVTYIH.

Transmembrane regions (helical) follow at residues Phe10–Leu29, Tyr36–Leu58, Phe112–Thr131, Ile188–Arg210, Met241–Phe260, and Met273–Ile295.

Its subcellular location is the cell membrane. This is an uncharacterized protein from Clostridium acetobutylicum (strain ATCC 824 / DSM 792 / JCM 1419 / IAM 19013 / LMG 5710 / NBRC 13948 / NRRL B-527 / VKM B-1787 / 2291 / W).